Consider the following 218-residue polypeptide: MGMDAEFFVDGERVDSYKCTGRWSAIVDVRHRPALTVRYRYERGYGHYALFVYFRHVATGMLETERVDVADRDRVVPVPEEWLEYIDDDDEERERQVEVFVCMKGDCYAHDGPLFVSEASKWCSREPEHVRIRDSPLEAVRQIKCAEDVFAFVEAFMRIEEGEYAWRDPLVIDQLNDQELASIEKVFASTVWNYYEKVNARPVLTFAENYLKKLNESL.

Its function is as follows. Facilitates AcMNPV replication in two non-permissive cell lines, IPLB-Ld652Y and IPLB-LdFB. The protein is Host range factor 1 (HRF-1) of Lepidoptera (butterflies and moths).